A 166-amino-acid chain; its full sequence is Crossover junction endodeoxyribonuclease RuvC (166 aa).

Catalysis depends on residues Asp7, Glu68, and Asp141. Mg(2+)-binding residues include Asp7, Glu68, and Asp141.

Belongs to the RuvC family. In terms of assembly, homodimer which binds Holliday junction (HJ) DNA. The HJ becomes 2-fold symmetrical on binding to RuvC with unstacked arms; it has a different conformation from HJ DNA in complex with RuvA. In the full resolvosome a probable DNA-RuvA(4)-RuvB(12)-RuvC(2) complex forms which resolves the HJ. Mg(2+) serves as cofactor.

Its subcellular location is the cytoplasm. It carries out the reaction Endonucleolytic cleavage at a junction such as a reciprocal single-stranded crossover between two homologous DNA duplexes (Holliday junction).. In terms of biological role, the RuvA-RuvB-RuvC complex processes Holliday junction (HJ) DNA during genetic recombination and DNA repair. Endonuclease that resolves HJ intermediates. Cleaves cruciform DNA by making single-stranded nicks across the HJ at symmetrical positions within the homologous arms, yielding a 5'-phosphate and a 3'-hydroxyl group; requires a central core of homology in the junction. The consensus cleavage sequence is 5'-(A/T)TT(C/G)-3'. Cleavage occurs on the 3'-side of the TT dinucleotide at the point of strand exchange. HJ branch migration catalyzed by RuvA-RuvB allows RuvC to scan DNA until it finds its consensus sequence, where it cleaves and resolves the cruciform DNA. This chain is Crossover junction endodeoxyribonuclease RuvC, found in Koribacter versatilis (strain Ellin345).